Consider the following 129-residue polypeptide: Glycine cleavage system H protein (129 aa).

One can recognise a Lipoyl-binding domain in the interval 24–106; it reads TFTVGISEHA…YGDGWLFRIK (83 aa). At lysine 65 the chain carries N6-lipoyllysine.

This sequence belongs to the GcvH family. In terms of assembly, the glycine cleavage system is composed of four proteins: P, T, L and H. Requires (R)-lipoate as cofactor.

The glycine cleavage system catalyzes the degradation of glycine. The H protein shuttles the methylamine group of glycine from the P protein to the T protein. This Idiomarina loihiensis (strain ATCC BAA-735 / DSM 15497 / L2-TR) protein is Glycine cleavage system H protein.